The primary structure comprises 308 residues: Follistatin-related protein 1 (308 aa).

The first 20 residues, 1-20 (MWKRWLALALALVAVAWVRA), serve as a signal peptide directing secretion. The Follistatin-like domain occupies 30-53 (ICANVFCGAGRECAVTEKGEPTCL). 5 disulfide bridges follow: C31–C42, C36–C52, C54–C84, C58–C77, and C66–C98. Residues 48 to 100 (GEPTCLCIEQCKPHKRPVCGSNGKTYLNHCELHRDACLTGSKIQVDYDGHCKE) form the Kazal-like domain. An N-linked (GlcNAc...) asparagine glycan is attached at N144. Residues 144-178 (NYSEILDKYFKNFDNGDSRLDSSEFLKFVEQNETA) enclose the EF-hand 1 domain. A Phosphoserine modification is found at S165. N175 and N180 each carry an N-linked (GlcNAc...) asparagine glycan. The EF-hand 2 domain occupies 193-228 (LRGLCVDALIELSDENADWKLSFQEFLKCLNPSFNP). The 55-residue stretch at 233 to 287 (CALEDETYADGAETEVDCNRCVCACGNWVCTAMTCDGKNQKGAQTQTEEEMTRYV) folds into the VWFC domain.

As to quaternary structure, homodimer. Interacts with SCN10A. Interacts with DIP2A; DIP2A may act as a cell surface receptor for FSTL1. Interacts with BMP4. Interacts with CD14; this interaction promotes TL4-mediated signaling cascade.

The protein localises to the secreted. In terms of biological role, secreted glycoprotein that is involved in various physiological processes, such as angiogenesis, regulation of the immune response, cell proliferation and differentiation. Plays a role in the development of the central nervous system, skeletal system, lungs, and ureter. Promotes endothelial cell survival, migration and differentiation into network structures in an AKT-dependent manner. Also promotes survival of cardiac myocytes. Initiates various signaling cascades by activating different receptors on the cell surface such as DIP2A, TLR4 or BMP receptors. The polypeptide is Follistatin-related protein 1 (FSTL1) (Macaca fascicularis (Crab-eating macaque)).